Reading from the N-terminus, the 939-residue chain is Valine--tRNA ligase (939 aa).

A 'HIGH' region motif is present at residues 45–55 (PNVTGTLHMGH). The 'KMSKS' region signature appears at 549 to 553 (KMSKS). An ATP-binding site is contributed by lysine 552. Residues 876–939 (AAETARLRKE…KIRVQLVKLA (64 aa)) are a coiled coil.

This sequence belongs to the class-I aminoacyl-tRNA synthetase family. ValS type 1 subfamily. Monomer.

The protein localises to the cytoplasm. The catalysed reaction is tRNA(Val) + L-valine + ATP = L-valyl-tRNA(Val) + AMP + diphosphate. Catalyzes the attachment of valine to tRNA(Val). As ValRS can inadvertently accommodate and process structurally similar amino acids such as threonine, to avoid such errors, it has a 'posttransfer' editing activity that hydrolyzes mischarged Thr-tRNA(Val) in a tRNA-dependent manner. This chain is Valine--tRNA ligase, found in Chromobacterium violaceum (strain ATCC 12472 / DSM 30191 / JCM 1249 / CCUG 213 / NBRC 12614 / NCIMB 9131 / NCTC 9757 / MK).